The chain runs to 291 residues: uncharacterized protein (291 aa).

A disordered region spans residues 77 to 140 (TVPQSSPTAI…PPTPVVEKSP (64 aa)). A compositionally biased stretch (pro residues) spans 125 to 134 (PVTPAHPPTP).

This is an uncharacterized protein from Synechocystis sp. (strain ATCC 27184 / PCC 6803 / Kazusa).